The sequence spans 722 residues: Probable acyl-activating enzyme 16, chloroplastic (722 aa).

The transit peptide at 1–47 directs the protein to the chloroplast; sequence MASTSLGASILVSHCSSAPEFQVSGMRLVFGYKAFGCRTSRRGFRVR.

The protein belongs to the ATP-dependent AMP-binding enzyme family.

The protein localises to the plastid. The protein resides in the chloroplast. Its function is as follows. May be involved in the activation of fatty acids to acyl-carrier-protein. The polypeptide is Probable acyl-activating enzyme 16, chloroplastic (AAE16) (Arabidopsis thaliana (Mouse-ear cress)).